Consider the following 381-residue polypeptide: Alkanesulfonate monooxygenase (381 aa).

This sequence belongs to the SsuD family. As to quaternary structure, homotetramer.

The enzyme catalyses an alkanesulfonate + FMNH2 + O2 = an aldehyde + FMN + sulfite + H2O + 2 H(+). In terms of biological role, catalyzes the desulfonation of aliphatic sulfonates. The chain is Alkanesulfonate monooxygenase from Citrobacter koseri (strain ATCC BAA-895 / CDC 4225-83 / SGSC4696).